The following is a 620-amino-acid chain: Chaperone protein HscA homolog (620 aa).

This sequence belongs to the heat shock protein 70 family.

Functionally, chaperone involved in the maturation of iron-sulfur cluster-containing proteins. Has a low intrinsic ATPase activity which is markedly stimulated by HscB. The sequence is that of Chaperone protein HscA homolog from Shewanella baltica (strain OS155 / ATCC BAA-1091).